The following is a 31-amino-acid chain: Protein YmiC (31 aa).

A helical membrane pass occupies residues 9–29 (WSWMGAFSLSMLFWAELLWII).

Its subcellular location is the cell inner membrane. This is Protein YmiC from Escherichia coli (strain K12).